The chain runs to 166 residues: Putative membrane protein 164 (166 aa).

Residues 1–4 (MYHP) lie on the Intravirion side of the membrane. The helical transmembrane segment at 5–25 (VVQVLIGLILVIILILGFYHL) threads the bilayer. Topologically, residues 26-166 (KKKSCKTDTD…TIMGIARNIL (141 aa)) are virion surface.

This sequence belongs to the asfivirus envelope protein p22 family.

It is found in the virion membrane. The protein localises to the host cell membrane. The chain is Putative membrane protein 164 from Ornithodoros (relapsing fever ticks).